The chain runs to 329 residues: DGAT1/2-independent enzyme synthesizing storage lipids (329 aa).

The Lumenal segment spans residues 1-50 (MIDNNQTCAAGQDSVPYVTCMIYVLEEWLGVEQLEDYLNFANHLLWVFTP). The N-linked (GlcNAc...) asparagine glycan is linked to N5. A helical transmembrane segment spans residues 51-71 (LILLILPYFTIFLLYLTIIFL). Topologically, residues 72-120 (HIYKRKNVLKEAYSHNLWDGARKTVATLWDGHAAVWHGYEVHGMEKIPE) are cytoplasmic. A helical membrane pass occupies residues 121–141 (GAALIIFYHGAIPIDFYYFMA). H129 is an active-site residue. The Lumenal portion of the chain corresponds to 142 to 329 (KIFIQKGRTC…DRFHKEQKAH (188 aa)).

It belongs to the diacylglycerol acyltransferase family. Highly divergent. Widely expressed, with highest level in the brain, followed by lung and duodenum, and lowest levels in tongue, testis, skin and ileum.

Its subcellular location is the endoplasmic reticulum membrane. The catalysed reaction is a 1,2-diacylglycerol + a 1,2-diacyl-sn-glycero-3-phosphocholine = a triacylglycerol + a 1-acyl-sn-glycero-3-phosphocholine. It catalyses the reaction a 1-O-alkyl-2-acyl-sn-glycero-3-phosphocholine + a 1,2-diacylglycerol = a 1-O-alkyl-sn-glycero-3-phosphocholine + a triacylglycerol. The enzyme catalyses a 2-acylglycerol + an acyl-CoA = a 1,2-diacylglycerol + CoA. It carries out the reaction an acyl-CoA + a 1,2-diacyl-sn-glycerol = a triacyl-sn-glycerol + CoA. The catalysed reaction is 2-(9Z-octadecenoyl)-glycerol + (9Z)-octadecenoyl-CoA = 1,2-di-(9Z-octadecenoyl)-glycerol + CoA. It catalyses the reaction 1,2-di-(9Z-octadecenoyl)-sn-glycerol + (9Z)-octadecenoyl-CoA = 1,2,3-tri-(9Z-octadecenoyl)-glycerol + CoA. Its activity is regulated as follows. Acyltransferase activity is specifically inhibited by TMX1 at the endoplasmic reticulum, restricting accumulation of triacylglycerol. Its function is as follows. Catalytic subunit of the alternative triglyceride biosynthesis pathway, which mediates formation of triacylglycerol from diacylglycerol and membrane phospholipids. Synthesizes triacylglycerol at the expense of membrane phospholipids, such as phosphatidylcholine (PC) and its ether-linked form (ePC), thereby altering the composition of membranes. The alternative triglyceride biosynthesis pathway is probably required to provide the energy required for rapid growth when fuel sources are limiting. It maintains mitochondrial function during periods of extracellular lipid starvation. Can also use acyl-CoA as donor: acts as a acyl-CoA:monoacylglycerol acyltransferase (MGAT), but also shows acyl-CoA:diacylglycerol acyltransferase (DGAT) activity. The protein is DGAT1/2-independent enzyme synthesizing storage lipids of Mus musculus (Mouse).